The following is a 657-amino-acid chain: Outer dense fiber protein 2 (657 aa).

Serine 73 and serine 74 each carry phosphoserine. The residue at position 92 (threonine 92) is a Phosphothreonine. A Phosphoserine; by TSSK4 modification is found at serine 95. 2 positions are modified to phosphoserine: serine 106 and serine 109. Position 110 is a phosphothreonine (threonine 110). Residues serine 115 and serine 129 each carry the phosphoserine modification. Lysine 138 participates in a covalent cross-link: Glycyl lysine isopeptide (Lys-Gly) (interchain with G-Cter in SUMO2). Serine 139 bears the Phosphoserine mark. Coiled coils occupy residues 144-423 and 461-635; these read QKGE…AEQL and EIIV…SDLR. Threonine 231 carries the phosphothreonine modification. Residues serine 261 and serine 632 each carry the phosphoserine modification.

This sequence belongs to the ODF2 family. As to quaternary structure, self-associates. Associates with microtubules and forms a fibrillar structure partially linked to the microtubule network. Interacts via its C-terminus with PLK1. Interacts with ODF1. Interacts with MARK4; the interaction is required for localization of ODF2 to centrioles. Interacts with TSSK4. Interacts with AKNA. Interacts with CFAP58. Interacts with BBOF1. Interacts with CCDC38. Interacts with CCDC42. In terms of processing, tyrosine phosphorylated. Phosphorylated on Ser-95 by TSSK4.

The protein resides in the cytoplasm. Its subcellular location is the cytoskeleton. The protein localises to the microtubule organizing center. It is found in the centrosome. It localises to the cell projection. The protein resides in the cilium. Its subcellular location is the centriole. The protein localises to the spindle pole. It is found in the flagellum. Its function is as follows. Seems to be a major component of sperm tail outer dense fibers (ODF). ODFs are filamentous structures located on the outside of the axoneme in the midpiece and principal piece of the mammalian sperm tail and may help to maintain the passive elastic structures and elastic recoil of the sperm tail. May have a modulating influence on sperm motility. Functions as a general scaffold protein that is specifically localized at the distal/subdistal appendages of mother centrioles. Component of the centrosome matrix required for the localization of PLK1 and NIN to the centrosomes. Required for the formation and/or maintenance of normal CETN1 assembly. The protein is Outer dense fiber protein 2 (ODF2) of Bos taurus (Bovine).